Consider the following 324-residue polypeptide: Acetyl-coenzyme A carboxylase carboxyl transferase subunit alpha (324 aa).

In terms of domain architecture, CoA carboxyltransferase C-terminal spans 44–297 (LEERAKQLRY…KAALLRNLAE (254 aa)).

Belongs to the AccA family. Acetyl-CoA carboxylase is a heterohexamer composed of biotin carboxyl carrier protein (AccB), biotin carboxylase (AccC) and two subunits each of ACCase subunit alpha (AccA) and ACCase subunit beta (AccD).

Its subcellular location is the cytoplasm. It catalyses the reaction N(6)-carboxybiotinyl-L-lysyl-[protein] + acetyl-CoA = N(6)-biotinyl-L-lysyl-[protein] + malonyl-CoA. Its pathway is lipid metabolism; malonyl-CoA biosynthesis; malonyl-CoA from acetyl-CoA: step 1/1. Component of the acetyl coenzyme A carboxylase (ACC) complex. First, biotin carboxylase catalyzes the carboxylation of biotin on its carrier protein (BCCP) and then the CO(2) group is transferred by the carboxyltransferase to acetyl-CoA to form malonyl-CoA. The chain is Acetyl-coenzyme A carboxylase carboxyl transferase subunit alpha from Thermosynechococcus vestitus (strain NIES-2133 / IAM M-273 / BP-1).